A 410-amino-acid polypeptide reads, in one-letter code: Arginine deiminase (410 aa).

Cys-400 (amidino-cysteine intermediate) is an active-site residue.

The protein belongs to the arginine deiminase family.

The protein localises to the cytoplasm. It catalyses the reaction L-arginine + H2O = L-citrulline + NH4(+). Its pathway is amino-acid degradation; L-arginine degradation via ADI pathway; carbamoyl phosphate from L-arginine: step 1/2. The sequence is that of Arginine deiminase from Bacillus cytotoxicus (strain DSM 22905 / CIP 110041 / 391-98 / NVH 391-98).